The primary structure comprises 171 residues: ATP synthase subunit b (171 aa).

The helical transmembrane segment at 10 to 30 threads the bilayer; sequence GLYYGDSIFYAVCFLLLMWII.

This sequence belongs to the ATPase B chain family. As to quaternary structure, F-type ATPases have 2 components, F(1) - the catalytic core - and F(0) - the membrane proton channel. F(1) has five subunits: alpha(3), beta(3), gamma(1), delta(1), epsilon(1). F(0) has three main subunits: a(1), b(2) and c(10-14). The alpha and beta chains form an alternating ring which encloses part of the gamma chain. F(1) is attached to F(0) by a central stalk formed by the gamma and epsilon chains, while a peripheral stalk is formed by the delta and b chains.

The protein localises to the cell membrane. In terms of biological role, f(1)F(0) ATP synthase produces ATP from ADP in the presence of a proton or sodium gradient. F-type ATPases consist of two structural domains, F(1) containing the extramembraneous catalytic core and F(0) containing the membrane proton channel, linked together by a central stalk and a peripheral stalk. During catalysis, ATP synthesis in the catalytic domain of F(1) is coupled via a rotary mechanism of the central stalk subunits to proton translocation. Component of the F(0) channel, it forms part of the peripheral stalk, linking F(1) to F(0). This chain is ATP synthase subunit b, found in Levilactobacillus brevis (strain ATCC 367 / BCRC 12310 / CIP 105137 / JCM 1170 / LMG 11437 / NCIMB 947 / NCTC 947) (Lactobacillus brevis).